Here is a 383-residue protein sequence, read N- to C-terminus: Envelope glycoprotein D (383 aa).

The signal sequence occupies residues 1-30 (MPAATMATPGYLACRTSVATLLFFVLLRRA). The Virion surface segment spans residues 31–358 (AILGAGGAPS…PKVVGPTVGP (328 aa)). 3 cysteine pairs are disulfide-bonded: Cys-76–Cys-197, Cys-115–Cys-212, and Cys-127–Cys-136. The profusion stretch occupies residues 244 to 311 (YQDKLKVASP…TSASGVIEIE (68 aa)). The interval 315–349 (ESDVRLVSYPPPTLPSPGPGGNENGAGYSDNRPDP) is disordered. Positions 323–332 (YPPPTLPSPG) are enriched in pro residues. Residues 359 to 379 (GAIILVVMCAPILIGLTAFTI) form a helical membrane-spanning segment. Residues 380 to 383 (RKYC) lie on the Intravirion side of the membrane.

This sequence belongs to the herpesviridae glycoprotein D family.

The protein resides in the virion membrane. In terms of biological role, envelope glycoprotein that binds to host cell entry receptors, promoting the virus entry into host cells. May trigger fusion with host membrane, by recruiting the fusion machinery composed of gB and gH/gL. The polypeptide is Envelope glycoprotein D (US6) (Amazona oratrix (yellow-headed parrot)).